Reading from the N-terminus, the 139-residue chain is uncharacterized protein (139 aa).

To E.coli YebE.

This is an uncharacterized protein from Yersinia enterocolitica.